A 513-amino-acid polypeptide reads, in one-letter code: MQSVTVLDFGSQYTQLIARRIRELGIYSEILPYNASPETIREHDPKAIILSGGPTSVYGDSALLPDGGVFMLGVPVLGICYGLQAIAKHFGGEVAGSSKQEFGRAKMLVSHNEESESPLFRNIPDSDVWMSHGDKVVRLPEGFRVTASSENSEMCALESYGSKAALKVYGLQFHPEVQHTLYGKQLLSNFLIDIAGIKPDWSPKSFIGHQIEEIRARAGKDKVICGISGGVDSTVAAVLVSQAIGKQLHCVFVDNGLLRKNEAVKVMNFLKPLGLSVTLADASDLFLKRLDKVASPEKKRKIIGRTFIHVFEQHLNEEKYLVQGTLYPDVIESVSVKGPSETIKSHHNVGGLPKRMKLKLIEPLRELFKDEVRAVGRELGIAEDILMRHPFPGPGLAVRVLGSVSRPRLDILREADEIFIEELKTSGLYQHVWQAFSVLLPVQSVGVMGDKRTYENVLALRAVESTDGMTADWAQLPHDFLARVSNRIINEVRGINRVAYDISSKPPATIEWE.

Residues 3-200 (SVTVLDFGSQ…LIDIAGIKPD (198 aa)) enclose the Glutamine amidotransferase type-1 domain. The Nucleophile role is filled by Cys80. Catalysis depends on residues His174 and Glu176. Residues 201–388 (WSPKSFIGHQ…LGIAEDILMR (188 aa)) enclose the GMPS ATP-PPase domain. Residue 228–234 (SGGVDST) coordinates ATP.

In terms of assembly, homodimer.

The enzyme catalyses XMP + L-glutamine + ATP + H2O = GMP + L-glutamate + AMP + diphosphate + 2 H(+). It functions in the pathway purine metabolism; GMP biosynthesis; GMP from XMP (L-Gln route): step 1/1. Catalyzes the synthesis of GMP from XMP. In Chlorobium phaeobacteroides (strain DSM 266 / SMG 266 / 2430), this protein is GMP synthase [glutamine-hydrolyzing].